The chain runs to 106 residues: AATCKETPPTWSGHLFEISTDNPRRADISYSREEKKIDTTDYKGVPLRTTLDDYATGTKYCRKSNLTGTIPTFGVPDKLPSPAGPHYLGGKLPSTGVLVLDFYGEK.

Asn65 is a glycosylation site (N-linked (GlcNAc...) asparagine).

Probable heterotrimer consisting of an alpha chain and two beta chains. The alpha chain can probably have different glycosylation states. Post-translationally, glycosylated.

Its function is as follows. Lectin with affinity for N-acetyl-galactosamine, carragenan and glycoprotein porcine stomach mucin (PSM). Has metal-independent hemagglutinating activity towards erythrocytes from rabbit and human. Hemagglutinating activity is not inhibited by D-galactose, D-glucose, D-mannose, D-fucose, methyl-alpha-D-galactopyranoside, methyl-alpha-D-glucopyranoside, N-acetyl-glucosamine, N-acetyl-mannosamine, D-fructose, alpha-D-lactose, beta-D-lactose, D-lactulose, D-sucrose, fucoidan or glycoproteins thyroglobulin and ovalmucoid. The sequence is that of Halilectin 3, beta chain from Haliclona caerulea (Blue Caribbean sponge).